The sequence spans 103 residues: MVQEKIRIKLKAFDHKVLDQSVKQIIDTVKRSGGVIKGPIPLPTQRKVWCVLRSPHKFEQSREHFEMRIHKRLIDIENATPQTIEALMDISLPAGVDVEIKLS.

Belongs to the universal ribosomal protein uS10 family. In terms of assembly, part of the 30S ribosomal subunit.

In terms of biological role, involved in the binding of tRNA to the ribosomes. The protein is Small ribosomal subunit protein uS10 of Persephonella marina (strain DSM 14350 / EX-H1).